The primary structure comprises 82 residues: Large ribosomal subunit protein uL23 (82 aa).

This sequence belongs to the universal ribosomal protein uL23 family. In terms of assembly, part of the 50S ribosomal subunit. Contacts protein L29.

In terms of biological role, binds to 23S rRNA. One of the proteins that surrounds the polypeptide exit tunnel on the outside of the ribosome. The polypeptide is Large ribosomal subunit protein uL23 (Methanospirillum hungatei JF-1 (strain ATCC 27890 / DSM 864 / NBRC 100397 / JF-1)).